Here is a 21-residue protein sequence, read N- to C-terminus: Peptidyl-prolyl cis-trans isomerase (21 aa).

The disordered stretch occupies residues 1 to 21; the sequence is ENFKIKHTEPGLLSMANAGKN.

The protein belongs to the cyclophilin-type PPIase family. PPIase A subfamily.

It carries out the reaction [protein]-peptidylproline (omega=180) = [protein]-peptidylproline (omega=0). Functionally, PPIases accelerate the folding of proteins. It catalyzes the cis-trans isomerization of proline imidic peptide bonds in oligopeptides. In Naegleria fowleri (Brain eating amoeba), this protein is Peptidyl-prolyl cis-trans isomerase.